The sequence spans 368 residues: tRNA-specific 2-thiouridylase MnmA (368 aa).

Residues 11–18 and methionine 37 each bind ATP; that span reads GMSGGVDS. Positions 97-99 are interaction with target base in tRNA; that stretch reads NPD. The Nucleophile role is filled by cysteine 102. Cysteine 102 and cysteine 199 are disulfide-bonded. Position 127 (glycine 127) interacts with ATP. The interaction with tRNA stretch occupies residues 149–151; it reads KDQ. The active-site Cysteine persulfide intermediate is the cysteine 199. Positions 311–312 are interaction with tRNA; that stretch reads RY.

This sequence belongs to the MnmA/TRMU family. Interacts with TusE.

It is found in the cytoplasm. The catalysed reaction is S-sulfanyl-L-cysteinyl-[protein] + uridine(34) in tRNA + AH2 + ATP = 2-thiouridine(34) in tRNA + L-cysteinyl-[protein] + A + AMP + diphosphate + H(+). In terms of biological role, catalyzes the 2-thiolation of uridine at the wobble position (U34) of tRNA(Lys), tRNA(Glu) and tRNA(Gln), leading to the formation of s(2)U34, the first step of tRNA-mnm(5)s(2)U34 synthesis. Sulfur is provided by IscS, via a sulfur-relay system. Binds ATP and its substrate tRNAs. The protein is tRNA-specific 2-thiouridylase MnmA of Escherichia coli O6:H1 (strain CFT073 / ATCC 700928 / UPEC).